Here is a 65-residue protein sequence, read N- to C-terminus: Large ribosomal subunit protein bL35 (65 aa).

The protein belongs to the bacterial ribosomal protein bL35 family.

The sequence is that of Large ribosomal subunit protein bL35 from Laribacter hongkongensis (strain HLHK9).